A 385-amino-acid chain; its full sequence is Succinyl-diaminopimelate desuccinylase (385 aa).

H73 contacts Zn(2+). Residue D75 is part of the active site. D106 provides a ligand contact to Zn(2+). E141 serves as the catalytic Proton acceptor. 3 residues coordinate Zn(2+): E142, E170, and H359.

It belongs to the peptidase M20A family. DapE subfamily. As to quaternary structure, homodimer. Requires Zn(2+) as cofactor. It depends on Co(2+) as a cofactor.

The enzyme catalyses N-succinyl-(2S,6S)-2,6-diaminopimelate + H2O = (2S,6S)-2,6-diaminopimelate + succinate. It functions in the pathway amino-acid biosynthesis; L-lysine biosynthesis via DAP pathway; LL-2,6-diaminopimelate from (S)-tetrahydrodipicolinate (succinylase route): step 3/3. Its function is as follows. Catalyzes the hydrolysis of N-succinyl-L,L-diaminopimelic acid (SDAP), forming succinate and LL-2,6-diaminopimelate (DAP), an intermediate involved in the bacterial biosynthesis of lysine and meso-diaminopimelic acid, an essential component of bacterial cell walls. The protein is Succinyl-diaminopimelate desuccinylase of Methylorubrum extorquens (strain CM4 / NCIMB 13688) (Methylobacterium extorquens).